Reading from the N-terminus, the 139-residue chain is Large ribosomal subunit protein uL16 (139 aa).

The segment at 1–21 (MLMPKRVQYRKTQRGRMKGNA) is disordered. The segment covering 7 to 17 (VQYRKTQRGRM) has biased composition (basic residues).

The protein belongs to the universal ribosomal protein uL16 family. As to quaternary structure, part of the 50S ribosomal subunit.

In terms of biological role, binds 23S rRNA and is also seen to make contacts with the A and possibly P site tRNAs. This chain is Large ribosomal subunit protein uL16, found in Chlorobaculum tepidum (strain ATCC 49652 / DSM 12025 / NBRC 103806 / TLS) (Chlorobium tepidum).